A 116-amino-acid chain; its full sequence is NADH-ubiquinone oxidoreductase chain 3 (116 aa).

The next 3 helical transmembrane spans lie at 4–24 (FMVM…LAFW), 56–76 (FFLV…LLPS), and 87–107 (FTLL…IYEW).

Belongs to the complex I subunit 3 family.

It localises to the mitochondrion membrane. The enzyme catalyses a ubiquinone + NADH + 5 H(+)(in) = a ubiquinol + NAD(+) + 4 H(+)(out). Its function is as follows. Core subunit of the mitochondrial membrane respiratory chain NADH dehydrogenase (Complex I) that is believed to belong to the minimal assembly required for catalysis. Complex I functions in the transfer of electrons from NADH to the respiratory chain. The immediate electron acceptor for the enzyme is believed to be ubiquinone. This is NADH-ubiquinone oxidoreductase chain 3 (MT-ND3) from Petromyzon marinus (Sea lamprey).